A 358-amino-acid chain; its full sequence is Na(+)/H(+) exchange regulatory cofactor NHE-RF1 (358 aa).

Residue serine 2 is modified to N-acetylserine. Serine 2 and serine 46 each carry phosphoserine. Positions 14–94 constitute a PDZ 1 domain; sequence LCCLEKGPNG…AVRLLVVDPE (81 aa). Residues 114-132 are compositionally biased toward low complexity; it reads QEAPGQAEPPAAAEVQGAG. The tract at residues 114 to 192 is disordered; that stretch reads QEAPGQAEPP…DPDSPAEASG (79 aa). Over residues 135 to 152 the composition is skewed to basic and acidic residues; that stretch reads NEPREADKSHPEQRELRP. A PDZ 2 domain is found at 154 to 234; the sequence is LCTMKKGPSG…ETKLLVVDRE (81 aa). Residues serine 162, serine 269, serine 280, serine 290, and serine 291 each carry the phosphoserine modification. The interval 277-358 is disordered; it reads ALESPRPALV…SKKNELFSNL (82 aa). Polar residues predominate over residues 288–306; it reads SASSDTSEELNSQDSPPKQ. Residue threonine 293 is modified to Phosphothreonine. A phosphoserine mark is found at serine 294, serine 299, and serine 302. A compositionally biased stretch (low complexity) spans 307–319; the sequence is DSTAPSSTSSSDP. The span at 348–358 shows a compositional bias: basic and acidic residues; that stretch reads WSKKNELFSNL.

In terms of assembly, homodimer, and heterodimer with NHERF2. Binds the N-termini of EZR, RDX and MSN. Binds the C-termini of PDGFRA, PDGFRB, ADRB2, NOS2 and CFTR. Binds ARHGAP17, EPI64, RACK1, OPRK1, GNAQ, CTNNB1 and PLCB3. Binds PDZK1. Interacts with CLCN3. Binds the C-terminus of PAG1. In resting T-cells, part of a PAG1-NHERF1-MSN complex which is disrupted upon TCR activation. Forms a complex with CFTR and SLC4A7. Forms a complex with SLC4A7 and ATP6V1B1. Interacts with TRPC4 (via the PDZ-binding domain). Directly interacts with HTR4. Interacts (via the PDZ 1 domain) with PODXL (via the C-terminal PDZ-binding motif DTHL); interaction is not detected in glomerular epithelium cells. Interacts (via the PDZ 1 domain) with PODXL (via the C-terminal PDZ-binding motif DTHL); the interaction take place early in the secretory pathway and is necessary for its apical membrane sorting. Interacts with SLC26A3. Interacts with MCC. Interacts with SLC34A1. Interacts (via the PDZ domains) with SLC26A6 isoform 4 and isoform 5. Interacts (via PDZ domains) with ACE2 (via PDZ-binding motif); the interaction may enhance ACE2 membrane residence. In terms of processing, phosphorylated on serine residues. As to expression, detected in liver, kidney, pancreas, prostate, spleen, small intestine and placenta, in particular in the syncytiotrophoblast.

It localises to the cytoplasm. The protein localises to the apical cell membrane. It is found in the endomembrane system. The protein resides in the cell projection. Its subcellular location is the filopodium. It localises to the ruffle. The protein localises to the microvillus. Scaffold protein that connects plasma membrane proteins with members of the ezrin/moesin/radixin family and thereby helps to link them to the actin cytoskeleton and to regulate their surface expression. Necessary for recycling of internalized ADRB2. Was first known to play a role in the regulation of the activity and subcellular location of SLC9A3. Necessary for cAMP-mediated phosphorylation and inhibition of SLC9A3. May enhance Wnt signaling. May participate in HTR4 targeting to microvilli. Involved in the regulation of phosphate reabsorption in the renal proximal tubules. Involved in sperm capacitation. May participate in the regulation of the chloride and bicarbonate homeostasis in spermatozoa. The protein is Na(+)/H(+) exchange regulatory cofactor NHE-RF1 of Homo sapiens (Human).